The primary structure comprises 575 residues: Probable methionine--tRNA ligase, mitochondrial (575 aa).

A 'HIGH' region motif is present at residues 52–62 (FYVNGPPHIGH). Residues 352–356 (KMSKS) carry the 'KMSKS' region motif. K355 contributes to the ATP binding site.

The protein belongs to the class-I aminoacyl-tRNA synthetase family.

Its subcellular location is the mitochondrion matrix. It catalyses the reaction tRNA(Met) + L-methionine + ATP = L-methionyl-tRNA(Met) + AMP + diphosphate. The protein is Probable methionine--tRNA ligase, mitochondrial (mmetS) of Dictyostelium discoideum (Social amoeba).